A 314-amino-acid polypeptide reads, in one-letter code: tRNA dimethylallyltransferase (314 aa).

13–20 (GPTASGKS) provides a ligand contact to ATP. 15-20 (TASGKS) contributes to the substrate binding site. Interaction with substrate tRNA regions lie at residues 38-41 (DSMQ) and 161-165 (QRIAR).

It belongs to the IPP transferase family. As to quaternary structure, monomer. Mg(2+) serves as cofactor.

It catalyses the reaction adenosine(37) in tRNA + dimethylallyl diphosphate = N(6)-dimethylallyladenosine(37) in tRNA + diphosphate. Functionally, catalyzes the transfer of a dimethylallyl group onto the adenine at position 37 in tRNAs that read codons beginning with uridine, leading to the formation of N6-(dimethylallyl)adenosine (i(6)A). The polypeptide is tRNA dimethylallyltransferase (Parvibaculum lavamentivorans (strain DS-1 / DSM 13023 / NCIMB 13966)).